We begin with the raw amino-acid sequence, 144 residues long: Protein SprT-like (144 aa).

Residues 4–143 form the SprT-like domain; the sequence is NKYVQEVSLQ…GKCRGKLTLK (140 aa). Zn(2+) is bound at residue His-64. The active site involves Glu-65. Residue His-68 coordinates Zn(2+).

This sequence belongs to the SprT family. Zn(2+) serves as cofactor.

Its subcellular location is the cytoplasm. The protein is Protein SprT-like of Streptococcus suis (strain 98HAH33).